A 355-amino-acid chain; its full sequence is NAD-dependent protein deacylase sirtuin-6 (355 aa).

S2 is subject to N-acetylserine. Residue S10 is modified to Phosphoserine; by MAPK8. The 246-residue stretch at 27-272 folds into the Deacetylase sirtuin-type domain; it reads PEELERKVWE…TRLMKHLGLE (246 aa). Position 33 is an N6-acetyllysine (K33). 7 residues coordinate NAD(+): A53, T57, F64, R65, W71, Q113, and H133. H133 functions as the Proton acceptor in the catalytic mechanism. Residues C141, C144, and C166 each coordinate Zn(2+). K170 is covalently cross-linked (Glycyl lysine isopeptide (Lys-Gly) (interchain with G-Cter in ubiquitin)). A Zn(2+)-binding site is contributed by C177. Positions 214, 216, 240, 242, and 258 each coordinate NAD(+). A disordered region spans residues 284 to 355; the sequence is RALPPLPRPP…KRVKAKAVPS (72 aa). A compositionally biased stretch (pro residues) spans 287-296; sequence PPLPRPPTPK. T294 carries the post-translational modification Phosphothreonine. Phosphoserine is present on residues S303 and S330. Residues 343–355 are compositionally biased toward basic residues; the sequence is RPPKRVKAKAVPS.

It belongs to the sirtuin family. Class IV subfamily. As to quaternary structure, homodimer; binds to nucleosomes and DNA ends as a homodimer. Interacts with RELA; interferes with RELA binding to target DNA. Interacts with SMARCA5; promoting recruitment of SMARCA5/SNF2H to double-strand breaks (DSBs) sites. Interacts with the mTORC2 complex; preventing the ability of SIRT6 to deacetylate FOXO1. Interacts with the CLOCK-BMAL1 complex; recruited by the CLOCK-BMAL1 complex to regulate expression of clock-controlled genes. Interacts with CSNK2A2; preventing CSNK2A2 localization to the nucleus. In terms of assembly, (Microbial infection) Interacts with Kaposi's sarcoma-associated herpesvirus protein VIRF-1; this interaction prevents SIRT6 deubiquitination by USP10. The cofactor is Zn(2+). In terms of processing, acetylated at Lys-33. Deacetylation at Lys-33 by SIRT1 promotes homomultimerization and binding to double-strand breaks (DSBs) sites. Post-translationally, phosphorylation at Ser-10 by MAPK8/JNK1 in response to oxidative stress stimulates the mono-ADP-ribosyltransferase activity on PARP1, leading to PARP1 recruitment to double-strand breaks (DSBs). Monoubiquitinated at Lys-170 by STUB1/CHIP, preventing its degradation by the proteasome. Deubiquitinated by USP10, also preventing its degradation by the proteasome. In terms of processing, sumoylated, leading to specifically decrease ability to deacetylate histone H3 at 'Lys-56' (H3K56ac).

It localises to the nucleus. It is found in the chromosome. Its subcellular location is the telomere. The protein resides in the endoplasmic reticulum. It carries out the reaction N(6)-acetyl-L-lysyl-[protein] + NAD(+) + H2O = 2''-O-acetyl-ADP-D-ribose + nicotinamide + L-lysyl-[protein]. The enzyme catalyses N(6)-tetradecanoyl-L-lysyl-[protein] + NAD(+) + H2O = 2''-O-tetradecanoyl-ADP-D-ribose + nicotinamide + L-lysyl-[protein]. The catalysed reaction is N(6)-hexadecanoyl-L-lysyl-[protein] + NAD(+) + H2O = 2''-O-hexadecanoyl-ADP-D-ribose + nicotinamide + L-lysyl-[protein]. It catalyses the reaction L-lysyl-[protein] + NAD(+) = N(6)-(ADP-D-ribosyl)-L-lysyl-[protein] + nicotinamide + H(+). It carries out the reaction L-arginyl-[protein] + NAD(+) = N(omega)-(ADP-D-ribosyl)-L-arginyl-[protein] + nicotinamide + H(+). Its activity is regulated as follows. Compared to the defatty-acylase activity, the protein deacetylase activity is weak in vitro, and requires activation. The histone deacetylase activity is strongly activated upon binding to nucleosomes and chromatin in vivo. Two molecules of SIRT6 associate with the acidic patch of one nucleosome, while the C-terminal disordered region of SIRT6 associates with nucleosomal DNA, leading to efficient histone deacetylation. The protein-lysine deacetylase activity is also activated by long-chain free fatty-acids. The histone deacetylase activity is specifically repressed by long non-coding RNA lncPRESS1, which binds to SIRT6 and prevents chromatin-binding, thereby promoting stem cell pluripotency. Due to its essential role as tumor suppressor and involvement in DNA repair and life span, extensive research is made for the identification of small compound regulators of SIRT6. Nitro-fatty acids (nitro-oleic acid and nitro-conjugated linoleic acid) strongly stimulate the protein-lysine deacetylase activity by forming a covalent Michael adduct formation with Cys-18. Activated by UBCS039 (4-(pyridin-3-yl)-4,5- dihydropyrrolo[1,2-a]quinoxaline). Inhibited by non-selective hydroxamate trichostatin A inhibitor. Deacetylase activity is activated by fluvastatin and quercetin-based compounds. The protein-lysine deacetylase activity, but not the defatty-acylase activity, is specifically activated by MDL-800 and MDL-801 activators in vivo, enhancing the histone deacetylase and tumor suppressor activities. MDL-800 and MDL-801 selectively activate SIRT6 and not other members of the sirtuin family. The binding-mode of MDL-801 is however subject to discussion. Functionally, NAD-dependent protein deacetylase, deacylase and mono-ADP-ribosyltransferase that plays an essential role in DNA damage repair, telomere maintenance, metabolic homeostasis, inflammation, tumorigenesis and aging. Displays protein-lysine deacetylase or defatty-acylase (demyristoylase and depalmitoylase) activity, depending on the context. Acts as a key histone deacetylase by catalyzing deacetylation of histone H3 at 'Lys-9', 'Lys-18' and 'Lys-56' (H3K9ac, H3K18ac and H3K56ac, respectively), suppressing target gene expression of several transcription factors, including NF-kappa-B. Acts as an inhibitor of transcription elongation by mediating deacetylation of H3K9ac and H3K56ac, preventing release of NELFE from chromatin and causing transcriptional pausing. Involved in DNA repair by promoting double-strand break (DSB) repair: acts as a DSB sensor by recognizing and binding DSB sites, leading to (1) recruitment of DNA repair proteins, such as SMARCA5/SNF2H, and (2) deacetylation of histone H3K9ac and H3K56ac. SIRT6 participation to DSB repair is probably involved in extension of life span. Also promotes DNA repair by deacetylating non-histone proteins, such as DDB2 and p53/TP53. Specifically deacetylates H3K18ac at pericentric heterochromatin, thereby maintaining pericentric heterochromatin silencing at centromeres and protecting against genomic instability and cellular senescence. Involved in telomere maintenance by catalyzing deacetylation of histone H3 in telomeric chromatin, regulating telomere position effect and telomere movement in response to DNA damage. Required for embryonic stem cell differentiation by mediating histone deacetylation of H3K9ac. Plays a major role in metabolism by regulating processes such as glycolysis, gluconeogenesis, insulin secretion and lipid metabolism. Inhibits glycolysis via histone deacetylase activity and by acting as a corepressor of the transcription factor HIF1A, thereby controlling the expression of multiple glycolytic genes. Has tumor suppressor activity by repressing glycolysis, thereby inhibiting the Warburg effect. Also regulates glycolysis and tumorigenesis by mediating deacetylation and nuclear export of non-histone proteins, such as isoform M2 of PKM (PKM2). Acts as a negative regulator of gluconeogenesis by mediating deacetylation of non-histone proteins, such as FOXO1 and KAT2A/GCN5. Promotes beta-oxidation of fatty acids during fasting by catalyzing deacetylation of NCOA2, inducing coactivation of PPARA. Acts as a regulator of lipid catabolism in brown adipocytes, both by catalyzing deacetylation of histones and non-histone proteins, such as FOXO1. Also acts as a regulator of circadian rhythms, both by regulating expression of clock-controlled genes involved in lipid and carbohydrate metabolism, and by catalyzing deacetylation of PER2. The defatty-acylase activity is specifically involved in regulation of protein secretion. Has high activity toward long-chain fatty acyl groups and mediates protein-lysine demyristoylation and depalmitoylation of target proteins, such as RRAS2 and TNF, thereby regulating their secretion. Also acts as a mono-ADP-ribosyltransferase by mediating mono-ADP-ribosylation of PARP1, TRIM28/KAP1 or SMARCC2/BAF170. Mono-ADP-ribosyltransferase activity is involved in DNA repair, cellular senescence, repression of LINE-1 retrotransposon elements and regulation of transcription. The protein is NAD-dependent protein deacylase sirtuin-6 of Homo sapiens (Human).